The sequence spans 743 residues: Polyribonucleotide nucleotidyltransferase (743 aa).

2 residues coordinate Mg(2+): Asp494 and Asp500. The region spanning 561 to 620 (PQHAEVFVNPDIIRLIIGPGGKNIKAITAATGASVDIEDSGRVSIFAPTAEALEKAREMV) is the KH domain. Residues 630–704 (GKNYNAKVRK…SRKAVLLEEQ (75 aa)) enclose the S1 motif domain. The tract at residues 702 to 743 (EEQGHPWNPEDTARPQRSDRGDRGDRRGDRGGRDRRDRGDRR) is disordered. A compositionally biased stretch (basic and acidic residues) spans 712–743 (DTARPQRSDRGDRGDRRGDRGGRDRRDRGDRR).

Belongs to the polyribonucleotide nucleotidyltransferase family. Mg(2+) is required as a cofactor.

The protein resides in the cytoplasm. The catalysed reaction is RNA(n+1) + phosphate = RNA(n) + a ribonucleoside 5'-diphosphate. Functionally, involved in mRNA degradation. Catalyzes the phosphorolysis of single-stranded polyribonucleotides processively in the 3'- to 5'-direction. This is Polyribonucleotide nucleotidyltransferase from Desulfovibrio desulfuricans (strain ATCC 27774 / DSM 6949 / MB).